The primary structure comprises 81 residues: Conotoxin Im016 (81 aa).

Positions 1 to 21 (MSTLGMMLLILLLLVPLATFA) are cleaved as a signal peptide. A propeptide spanning residues 22 to 31 (DDGPTMRGHR) is cleaved from the precursor.

The protein belongs to the conotoxin N superfamily. In terms of processing, contains 5 disulfide bonds. As to expression, expressed by the venom duct.

The protein localises to the secreted. In terms of biological role, probable neurotoxin. This Conus imperialis (Imperial cone) protein is Conotoxin Im016.